We begin with the raw amino-acid sequence, 100 residues long: Urease subunit gamma (100 aa).

This sequence belongs to the urease gamma subunit family. As to quaternary structure, heterotrimer of UreA (gamma), UreB (beta) and UreC (alpha) subunits. Three heterotrimers associate to form the active enzyme.

Its subcellular location is the cytoplasm. The catalysed reaction is urea + 2 H2O + H(+) = hydrogencarbonate + 2 NH4(+). It participates in nitrogen metabolism; urea degradation; CO(2) and NH(3) from urea (urease route): step 1/1. The sequence is that of Urease subunit gamma from Arthrobacter sp. (strain FB24).